We begin with the raw amino-acid sequence, 437 residues long: Protein arginine methyltransferase NDUFAF7, mitochondrial (437 aa).

The N-terminal 42 residues, 1–42 (MSGLARLQRLQKFGFLMVSASANRPIQRYQCSRTEKPQKRTS), are a transit peptide targeting the mitochondrion.

It belongs to the NDUFAF7 family.

It localises to the mitochondrion. The catalysed reaction is L-arginyl-[protein] + 2 S-adenosyl-L-methionine = N(omega),N(omega)'-dimethyl-L-arginyl-[protein] + 2 S-adenosyl-L-homocysteine + 2 H(+). Its function is as follows. Arginine methyltransferase involved in the assembly or stability of mitochondrial NADH:ubiquinone oxidoreductase complex (complex I). Acts by mediating symmetric dimethylation of 'Arg-118' of ndufs2 after it assembles into the complex I, stabilizing the early intermediate complex. The polypeptide is Protein arginine methyltransferase NDUFAF7, mitochondrial (Xenopus laevis (African clawed frog)).